Consider the following 715-residue polypeptide: D-ribulokinase YDR109C (715 aa).

The interval 1-27 is disordered; that stretch reads MKSRKRQNNMQNETREPAVLSSQETSI.

The protein belongs to the FGGY kinase family.

It carries out the reaction D-ribulose + ATP = D-ribulose 5-phosphate + ADP + H(+). Its pathway is carbohydrate metabolism; pentose and glucuronate interconversion. In terms of biological role, catalyzes ATP-dependent phosphorylation of D-ribulose at C-5 to form D-ribulose 5-phosphate. Postulated to function in a metabolite repair mechanism by preventing toxic accumulation of free D-ribulose formed by non-specific phosphatase activities. Alternatively, may play a role in regulating D-ribulose 5-phosphate recycling in the pentose phosphate pathway. The polypeptide is D-ribulokinase YDR109C (Saccharomyces cerevisiae (strain ATCC 204508 / S288c) (Baker's yeast)).